The sequence spans 63 residues: Conotoxin Cal12.5 (63 aa).

The signal sequence occupies residues 1–21; it reads MKVTCVLVVLLLLLPYGDLLG.

Belongs to the conotoxin O1 superfamily. Contains 4 disulfide bonds. Expressed by the venom duct.

It localises to the secreted. Functionally, probable neurotoxin. The sequence is that of Conotoxin Cal12.5 from Californiconus californicus (California cone).